A 343-amino-acid chain; its full sequence is MLTNRQLLILQVIVNDFIRSAQPVGSRTLSKKEDITFSSATIRNEMADLEELGFIEKTHSSSGRIPSEKGYRYYVDHLLSPGKLSKTDLNIIHSIFKEKIFELEKAVQKSAQVLSDLTNYTSIVLGPRLSENHLKQIQIVPIQPKKAVAILVTNTGHVENKTINFPAEVDLSDLEKLVNILNERLRGVPISELKDRIFKEVVIFLKSHIQNYDTILHALGATLDSSVQTDRLFFGGKINMLNQPEFHDIDRVKSLLSLIEKEQEILRLFQSTESGITIKIGKENDYEEMENCSLITATYTVGSKQIGSIAVIGPTRMDYSRVVGLLQHVSSDLSKALTSLYDG.

This sequence belongs to the HrcA family.

Negative regulator of class I heat shock genes (grpE-dnaK-dnaJ and groELS operons). Prevents heat-shock induction of these operons. This Bacillus licheniformis (strain ATCC 14580 / DSM 13 / JCM 2505 / CCUG 7422 / NBRC 12200 / NCIMB 9375 / NCTC 10341 / NRRL NRS-1264 / Gibson 46) protein is Heat-inducible transcription repressor HrcA.